Here is an 86-residue protein sequence, read N- to C-terminus: Co-chaperonin GroES (86 aa).

The protein belongs to the GroES chaperonin family. As to quaternary structure, heptamer of 7 subunits arranged in a ring. Interacts with the chaperonin GroEL.

The protein resides in the cytoplasm. In terms of biological role, together with the chaperonin GroEL, plays an essential role in assisting protein folding. The GroEL-GroES system forms a nano-cage that allows encapsulation of the non-native substrate proteins and provides a physical environment optimized to promote and accelerate protein folding. GroES binds to the apical surface of the GroEL ring, thereby capping the opening of the GroEL channel. The protein is Co-chaperonin GroES of Campylobacter jejuni subsp. doylei (strain ATCC BAA-1458 / RM4099 / 269.97).